Here is a 177-residue protein sequence, read N- to C-terminus: Large ribosomal subunit protein uL6 (177 aa).

The protein belongs to the universal ribosomal protein uL6 family. Part of the 50S ribosomal subunit.

This protein binds to the 23S rRNA, and is important in its secondary structure. It is located near the subunit interface in the base of the L7/L12 stalk, and near the tRNA binding site of the peptidyltransferase center. The chain is Large ribosomal subunit protein uL6 from Rhodopseudomonas palustris (strain HaA2).